We begin with the raw amino-acid sequence, 154 residues long: 17 kDa surface antigen (154 aa).

The first 19 residues, 1-19 (MKLLSKIMIIALAASMLQA), serve as a signal peptide directing secretion. Cys20 is lipidated: N-palmitoyl cysteine. Residue Cys20 is the site of S-diacylglycerol cysteine attachment.

It belongs to the rickettsiale 17 kDa surface antigen family.

It is found in the cell outer membrane. The polypeptide is 17 kDa surface antigen (omp) (Rickettsia rhipicephali).